A 742-amino-acid chain; its full sequence is mRNA export factor ICP27 homolog (742 aa).

Over residues 1 to 11 (MELHSRGRHDA) the composition is skewed to basic and acidic residues. The disordered stretch occupies residues 1–202 (MELHSRGRHD…NHHGSSAGPQ (202 aa)). The span at 72–85 (SHHHRPCVPARRPR) shows a compositional bias: basic residues. Residues 153-171 (KSYDNDDGEPHHHGGDSTH) are compositionally biased toward basic and acidic residues. Over residues 179 to 202 (CPTTFGSSHPSSANNHHGSSAGPQ) the composition is skewed to polar residues. Zn(2+)-binding residues include Cys-387, His-494, Cys-496, and Cys-501. Residues 387–501 (CILDHQDGWG…QCHECQNEMC (115 aa)) form a CHC2-type zinc finger. Residues 540–742 (ASNHATAGGQ…MLCYSDDMDD (203 aa)) are disordered. The segment covering 578-587 (YDKKDREGSH) has biased composition (basic and acidic residues). Residues 614–626 (GELEEDEDSDDAS) are compositionally biased toward acidic residues. Polar residues predominate over residues 692–703 (QSANGNHSTTAT).

Belongs to the HHV-1 ICP27 protein family. Self-associates and forms high-molecular-mass complexes. Interacts with host DDX39A and DDX39B; these interactions are required for UL69 function in mRNA export. Interacts with host SUPT6H, EIF4A1 and PABPC1. In terms of processing, phosphorylated by UL97 and host CDK1, CDK7 and CD9. Phosphorylation by CDKs impacts on UL69 nuclear localization and activity.

The protein localises to the virion tegument. It is found in the virion. It localises to the host nucleus. Its subcellular location is the host cytoplasm. Immediate early (EI) protein that plays many roles during productive infection including regulation of host cell cycle progression, regulation of viral gene expression or nuclear export of intronless viral RNAs. Acts as a transcriptional transactivator via interaction with the cellular transcription elongation factor SUPT6H and as a nuclear RNA export factor via interaction with UAP56, a component of the cellular mRNA export machinery. The sequence is that of mRNA export factor ICP27 homolog from Human cytomegalovirus (strain Merlin) (HHV-5).